The chain runs to 299 residues: Hemolysin C homolog (299 aa).

CBS domains are found at residues 80-142 (MVPR…NGRL) and 145-202 (LIRK…IDDE).

It belongs to the UPF0053 family. Hemolysin C subfamily.

This Rickettsia rickettsii (strain Sheila Smith) protein is Hemolysin C homolog (tlyC).